The primary structure comprises 298 residues: GPN-loop GTPase QQT1 (298 aa).

Residue 12 to 17 coordinates GTP; sequence GSGKTT. Residues 69-71 carry the Gly-Pro-Asn (GPN)-loop; involved in dimer interface motif; the sequence is GPN. GTP is bound at residue 173–176; the sequence is SKID.

Belongs to the GPN-loop GTPase family. Heterodimer with QQT2. Expressed in vascular tissues, root tips, apical and root meristematic regions, and floral primordia.

It is found in the cytoplasm. Its subcellular location is the nucleus. The protein resides in the cytoskeleton. It localises to the spindle. The protein localises to the phragmoplast. In terms of biological role, small GTPase that is essential for the correct formation of the tangential divisions in early embryos. Associates with microtubule during mitosis and may function in the positioning of the division plane. May participate in the patterning of the early embryo at the octant-dermatogen transition. Is crucial for normal development of the plant. The polypeptide is GPN-loop GTPase QQT1 (Arabidopsis thaliana (Mouse-ear cress)).